Consider the following 700-residue polypeptide: Suprabasin (700 aa).

Positions 1–23 (MYLVSLLSSCCLLVLLGTLPARA) are cleaved as a signal peptide. Disordered stretches follow at residues 133 to 158 (QGGS…VANK), 183 to 258 (HAFG…VADK), and 283 to 391 (HAFG…GAHH). The stretch at 488-546 (KEAEKVAHGVQNGVNQAQKEAEKVAHGVQNGVNQAQKEAEKVAHGVQNGVNQAQKEAEK) forms a coiled coil. Residues 641-654 (GVNQPSKEANQLLN) are compositionally biased toward polar residues. Positions 641 to 669 (GVNQPSKEANQLLNGSHQGQGGYGGQHGG) are disordered. Positions 658 to 668 (QGQGGYGGQHG) are enriched in gly residues.

Detected in epidermis, in suprabasal keratinocytes. Detected in suprabasal layers of embryonic epidermis and in stratified layers of embryonic tongue and palate. Detected in adult stomach.

The protein localises to the secreted. The chain is Suprabasin (Sbsn) from Mus musculus (Mouse).